A 387-amino-acid polypeptide reads, in one-letter code: MASHPVFIDLSLDEQVQELRKFFKKLGAEISSEKSNKGVEDDLHKIIGVCEVCFKDGEPAQIDGILNSIVSIMITIPLDRGENIVLAYCEKMTKAPNQPLAKVCLQSLWRLFNNLDTASPLRYHVYYHLVQVAKQCDQVLEVFTGVDQLKSQFANCPPSSEQMQKLYRLLHDVTKDTNLELSSKVMIELLGTYTADNACVAREDAMKCIVTALADPNTFLLDPLLSLKPVRFLEGDLIHDLLSIFVSDKLPSYVQFYEDHKEFVNSQGLNHDQNMKKMRLLTFMQLAESYPEMSFDTLTKELQINDDEVEPFVIEVLKTKLVRARLDQANRKVHISSTMHRTFGAPQWEQLRDLLQAWKENLSSVREGLTNVSSAQLDLARTQKLIH.

The region spanning 181-340 (LSSKVMIELL…RKVHISSTMH (160 aa)) is the PCI domain.

Belongs to the eIF-3 subunit M family. In terms of assembly, component of the eukaryotic translation initiation factor 3 (eIF-3) complex. The eIF-3 complex interacts with pix.

Its subcellular location is the cytoplasm. It localises to the golgi apparatus. Its function is as follows. Component of the eukaryotic translation initiation factor 3 (eIF-3) complex, which is involved in protein synthesis of a specialized repertoire of mRNAs and, together with other initiation factors, stimulates binding of mRNA and methionyl-tRNAi to the 40S ribosome. The eIF-3 complex specifically targets and initiates translation of a subset of mRNAs involved in cell proliferation. The chain is Eukaryotic translation initiation factor 3 subunit M from Drosophila grimshawi (Hawaiian fruit fly).